A 121-amino-acid polypeptide reads, in one-letter code: Spindle and kinetochore-associated protein 2 (121 aa).

Phosphoserine is present on serine 101.

Belongs to the SKA2 family. Component of the SKA1 complex, composed of SKA1, SKA2 and SKA3. Forms a heterodimer with SKA1; the heterodimer interacting with SKA3. The core SKA1 complex is composed of 2 SKA1-SKA2 heterodimers, each heterodimer interacting with a molecule of the SKA3 homodimer. The core SKA1 complex associates with microtubules and forms oligomeric assemblies. Interacts directly with SKA1. Binds directly to microtubules; but with a much lower affinity than SKA1. May interact with NR3C1; the relevance of such interaction remains unclear in vivo.

It is found in the cytoplasm. Its subcellular location is the cytoskeleton. It localises to the spindle. The protein localises to the chromosome. The protein resides in the centromere. It is found in the kinetochore. In terms of biological role, component of the SKA1 complex, a microtubule-binding subcomplex of the outer kinetochore that is essential for proper chromosome segregation. Required for timely anaphase onset during mitosis, when chromosomes undergo bipolar attachment on spindle microtubules leading to silencing of the spindle checkpoint. The SKA1 complex is a direct component of the kinetochore-microtubule interface and directly associates with microtubules as oligomeric assemblies. The complex facilitates the processive movement of microspheres along a microtubule in a depolymerization-coupled manner. In the complex, it is required for SKA1 localization. Affinity for microtubules is synergistically enhanced in the presence of the ndc-80 complex and may allow the ndc-80 complex to track depolymerizing microtubules. The polypeptide is Spindle and kinetochore-associated protein 2 (SKA2) (Homo sapiens (Human)).